The primary structure comprises 1136 residues: Rho GTPase-activating protein 45 (1136 aa).

Disordered stretches follow at residues 1 to 73 (MFSR…RHAS) and 91 to 110 (HRSP…GAGP). 5 positions are modified to phosphoserine: serine 23, serine 25, serine 73, serine 93, and serine 99. The F-BAR domain occupies 269–539 (EEVDVLLQRC…SSKLYDPGQQ (271 aa)). Coiled-coil stretches lie at residues 376–412 (EHEK…YVQR) and 440–499 (TATK…RQSD). Phosphoserine is present on residues serine 569, serine 578, serine 592, and serine 619. The tract at residues 583–662 (DVARPEAAGS…SSTEELVDPD (80 aa)) is disordered. Residues 646–655 (TSSSGTMSST) are compositionally biased toward low complexity. The segment at 702–747 (THRLRKLRTPAKCRECNSYVYFQGAECEECCLACHKKCLETLAIQC) adopts a Phorbol-ester/DAG-type zinc-finger fold. In terms of domain architecture, Rho-GAP spans 761-974 (QDFSHAARSA…TLIVHYGLVF (214 aa)). Residues serine 949, serine 1027, serine 1030, and serine 1032 each carry the phosphoserine modification. The segment at 1061 to 1136 (EASLEVASGS…SCRERQPEFV (76 aa)) is disordered. The span at 1095–1109 (QQLSGFNTNQSNNVL) shows a compositional bias: polar residues.

HA-1 forms a complex with MHC class I HLA-A*0201. Expressed on cells of the hematopoietic lineage. Detected in dendritic cells and epidermal Langerhans cells. Expressed in peripheral blood mononuclear cells, in all leukemia/lymphoma cell lines. Detected also in some solid tumors and tissues such as cancerous and non-cancerous tissue.

The protein resides in the cytoplasm. It localises to the cell projection. Its subcellular location is the ruffle membrane. Functionally, contains a GTPase activator for the Rho-type GTPases (RhoGAP) domain that would be able to negatively regulate the actin cytoskeleton as well as cell spreading. However, also contains N-terminally a BAR-domin which is able to play an autoinhibitory effect on this RhoGAP activity. Its function is as follows. Precursor of the histocompatibility antigen HA-1. More generally, minor histocompatibility antigens (mHags) refer to immunogenic peptide which, when complexed with MHC, can generate an immune response after recognition by specific T-cells. The peptides are derived from polymorphic intracellular proteins, which are cleaved by normal pathways of antigen processing. The binding of these peptides to MHC class I or class II molecules and its expression on the cell surface can stimulate T-cell responses and thereby trigger graft rejection or graft-versus-host disease (GVHD) after hematopoietic stem cell transplantation from HLA-identical sibling donor. GVHD is a frequent complication after bone marrow transplantation (BMT), due to mismatch of minor histocompatibility antigen in HLA-matched sibling marrow transplants. Specifically, mismatching for mHag HA-1 which is recognized as immunodominant, is shown to be associated with the development of severe GVHD after HLA-identical BMT. HA-1 is presented to the cell surface by MHC class I HLA-A*0201, but also by other HLA-A alleles. This complex specifically elicits donor-cytotoxic T-lymphocyte (CTL) reactivity against hematologic malignancies after treatment by HLA-identical allogenic BMT. It induces cell recognition and lysis by CTL. This chain is Rho GTPase-activating protein 45, found in Homo sapiens (Human).